The following is a 396-amino-acid chain: Phosphoglycerate kinase (396 aa).

Substrate-binding positions include 20–22 (DIN), R35, 58–61 (HQGR), R115, and R155. ATP-binding positions include E328 and 353–356 (GGDT).

This sequence belongs to the phosphoglycerate kinase family. As to quaternary structure, monomer.

Its subcellular location is the cytoplasm. It carries out the reaction (2R)-3-phosphoglycerate + ATP = (2R)-3-phospho-glyceroyl phosphate + ADP. Its pathway is carbohydrate degradation; glycolysis; pyruvate from D-glyceraldehyde 3-phosphate: step 2/5. This is Phosphoglycerate kinase from Natronomonas pharaonis (strain ATCC 35678 / DSM 2160 / CIP 103997 / JCM 8858 / NBRC 14720 / NCIMB 2260 / Gabara) (Halobacterium pharaonis).